We begin with the raw amino-acid sequence, 97 residues long: Coiled-coil domain-containing protein 167 (97 aa).

Residues 2–78 (TKKKRENLGV…LLRHENRKNT (77 aa)) adopt a coiled-coil conformation. The chain crosses the membrane as a helical span at residues 78–95 (TLLSVAIFTVFALLYAYW).

Its subcellular location is the membrane. The polypeptide is Coiled-coil domain-containing protein 167 (Ccdc167) (Mus musculus (Mouse)).